A 450-amino-acid chain; its full sequence is tRNA modification GTPase MnmE (450 aa).

Arginine 25, glutamate 86, and arginine 126 together coordinate (6S)-5-formyl-5,6,7,8-tetrahydrofolate. Residues glycine 221–glycine 373 enclose the TrmE-type G domain. Asparagine 231 contributes to the K(+) binding site. GTP-binding positions include asparagine 231–serine 236, threonine 250–threonine 256, aspartate 275–glycine 278, and asparagine 336–aspartate 339. Mg(2+) is bound at residue serine 235. 3 residues coordinate K(+): threonine 250, leucine 252, and threonine 255. Threonine 256 is a binding site for Mg(2+). A (6S)-5-formyl-5,6,7,8-tetrahydrofolate-binding site is contributed by lysine 450.

It belongs to the TRAFAC class TrmE-Era-EngA-EngB-Septin-like GTPase superfamily. TrmE GTPase family. Homodimer. Heterotetramer of two MnmE and two MnmG subunits. Requires K(+) as cofactor.

It is found in the cytoplasm. In terms of biological role, exhibits a very high intrinsic GTPase hydrolysis rate. Involved in the addition of a carboxymethylaminomethyl (cmnm) group at the wobble position (U34) of certain tRNAs, forming tRNA-cmnm(5)s(2)U34. The sequence is that of tRNA modification GTPase MnmE from Parasynechococcus marenigrum (strain WH8102).